The primary structure comprises 114 residues: T cell receptor beta variable 6-5 (114 aa).

Positions 1–21 (MSIGLLCCAALSLLWAGPVNA) are cleaved as a signal peptide. The Ig-like domain occupies 22 to 114 (GVTQTPKFQV…TSVYFCASSY (93 aa)). Cys42 and Cys110 are disulfide-bonded. An N-linked (GlcNAc...) asparagine glycan is attached at Asn84.

In terms of assembly, alpha-beta TR is a heterodimer composed of an alpha and beta chain; disulfide-linked. The alpha-beta TR is associated with the transmembrane signaling CD3 coreceptor proteins to form the TR-CD3 (TcR or TCR). The assembly of alpha-beta TR heterodimers with CD3 occurs in the endoplasmic reticulum where a single alpha-beta TR heterodimer associates with one CD3D-CD3E heterodimer, one CD3G-CD3E heterodimer and one CD247 homodimer forming a stable octameric structure. CD3D-CD3E and CD3G-CD3E heterodimers preferentially associate with TR alpha and TR beta chains, respectively. The association of the CD247 homodimer is the last step of TcR assembly in the endoplasmic reticulum and is required for transport to the cell surface.

The protein localises to the cell membrane. Functionally, v region of the variable domain of T cell receptor (TR) beta chain that participates in the antigen recognition. Alpha-beta T cell receptors are antigen specific receptors which are essential to the immune response and are present on the cell surface of T lymphocytes. Recognize peptide-major histocompatibility (MH) (pMH) complexes that are displayed by antigen presenting cells (APC), a prerequisite for efficient T cell adaptive immunity against pathogens. Binding of alpha-beta TR to pMH complex initiates TR-CD3 clustering on the cell surface and intracellular activation of LCK that phosphorylates the ITAM motifs of CD3G, CD3D, CD3E and CD247 enabling the recruitment of ZAP70. In turn ZAP70 phosphorylates LAT, which recruits numerous signaling molecules to form the LAT signalosome. The LAT signalosome propagates signal branching to three major signaling pathways, the calcium, the mitogen-activated protein kinase (MAPK) kinase and the nuclear factor NF-kappa-B (NF-kB) pathways, leading to the mobilization of transcription factors that are critical for gene expression and essential for T cell growth and differentiation. The T cell repertoire is generated in the thymus, by V-(D)-J rearrangement. This repertoire is then shaped by intrathymic selection events to generate a peripheral T cell pool of self-MH restricted, non-autoaggressive T cells. Post-thymic interaction of alpha-beta TR with the pMH complexes shapes TR structural and functional avidity. This Homo sapiens (Human) protein is T cell receptor beta variable 6-5.